The primary structure comprises 295 residues: 4-hydroxy-tetrahydrodipicolinate synthase (295 aa).

Pyruvate is bound at residue T48. Y136 functions as the Proton donor/acceptor in the catalytic mechanism. K164 serves as the catalytic Schiff-base intermediate with substrate. A pyruvate-binding site is contributed by I206.

The protein belongs to the DapA family. As to quaternary structure, homotetramer; dimer of dimers.

It localises to the cytoplasm. The enzyme catalyses L-aspartate 4-semialdehyde + pyruvate = (2S,4S)-4-hydroxy-2,3,4,5-tetrahydrodipicolinate + H2O + H(+). It functions in the pathway amino-acid biosynthesis; L-lysine biosynthesis via DAP pathway; (S)-tetrahydrodipicolinate from L-aspartate: step 3/4. In terms of biological role, catalyzes the condensation of (S)-aspartate-beta-semialdehyde [(S)-ASA] and pyruvate to 4-hydroxy-tetrahydrodipicolinate (HTPA). This is 4-hydroxy-tetrahydrodipicolinate synthase from Actinobacillus pleuropneumoniae serotype 7 (strain AP76).